A 158-amino-acid polypeptide reads, in one-letter code: 6,7-dimethyl-8-ribityllumazine synthase (158 aa).

5-amino-6-(D-ribitylamino)uracil-binding positions include Phe22, 57-59 (AVE), and 81-83 (AVI). Residue 86–87 (GT) participates in (2S)-2-hydroxy-3-oxobutyl phosphate binding. His89 (proton donor) is an active-site residue. Phe114 serves as a coordination point for 5-amino-6-(D-ribitylamino)uracil. Arg128 serves as a coordination point for (2S)-2-hydroxy-3-oxobutyl phosphate.

Belongs to the DMRL synthase family. As to quaternary structure, forms an icosahedral capsid composed of 60 subunits, arranged as a dodecamer of pentamers.

It catalyses the reaction (2S)-2-hydroxy-3-oxobutyl phosphate + 5-amino-6-(D-ribitylamino)uracil = 6,7-dimethyl-8-(1-D-ribityl)lumazine + phosphate + 2 H2O + H(+). Its pathway is cofactor biosynthesis; riboflavin biosynthesis; riboflavin from 2-hydroxy-3-oxobutyl phosphate and 5-amino-6-(D-ribitylamino)uracil: step 1/2. In terms of biological role, catalyzes the formation of 6,7-dimethyl-8-ribityllumazine by condensation of 5-amino-6-(D-ribitylamino)uracil with 3,4-dihydroxy-2-butanone 4-phosphate. This is the penultimate step in the biosynthesis of riboflavin. In Shewanella oneidensis (strain ATCC 700550 / JCM 31522 / CIP 106686 / LMG 19005 / NCIMB 14063 / MR-1), this protein is 6,7-dimethyl-8-ribityllumazine synthase.